Consider the following 255-residue polypeptide: Type III pantothenate kinase (255 aa).

7 to 14 is a binding site for ATP; the sequence is DVGNTRLK. Substrate contacts are provided by residues Y96 and 103–106; that span reads GADR. D105 (proton acceptor) is an active-site residue. T133 lines the ATP pocket. Residue T183 coordinates substrate.

The protein belongs to the type III pantothenate kinase family. Homodimer. NH4(+) is required as a cofactor. K(+) serves as cofactor.

Its subcellular location is the cytoplasm. It carries out the reaction (R)-pantothenate + ATP = (R)-4'-phosphopantothenate + ADP + H(+). It functions in the pathway cofactor biosynthesis; coenzyme A biosynthesis; CoA from (R)-pantothenate: step 1/5. In terms of biological role, catalyzes the phosphorylation of pantothenate (Pan), the first step in CoA biosynthesis. The sequence is that of Type III pantothenate kinase from Polaromonas sp. (strain JS666 / ATCC BAA-500).